The following is a 556-amino-acid chain: TNF receptor-associated factor 6-A (556 aa).

The segment at 72–111 adopts an RING-type; degenerate zinc-finger fold; it reads CPICLMALREAVQTPCGHRFCKACILKSLRNAGHKCPVDN. 2 TRAF-type zinc fingers span residues 148–204 and 205–261; these read RHLE…EDKS and GHEL…HNLA. One can recognise an MATH domain in the interval 384-533; the sequence is NGVFIWRIKG…NDTLLVRCSV (150 aa).

The protein belongs to the TNF receptor-associated factor family. A subfamily. In terms of assembly, homotrimer. Homooligomer. Interacts with tifa. As to expression, highly expressed in ovary and moderately expressed in kidney, spleen, stomach, colon and testis.

The protein resides in the cytoplasm. It localises to the cell cortex. The protein localises to the nucleus. It is found in the lipid droplet. The catalysed reaction is S-ubiquitinyl-[E2 ubiquitin-conjugating enzyme]-L-cysteine + [acceptor protein]-L-lysine = [E2 ubiquitin-conjugating enzyme]-L-cysteine + N(6)-ubiquitinyl-[acceptor protein]-L-lysine.. Its pathway is protein modification; protein ubiquitination. E3 ubiquitin ligase that, together with UBE2N and UBE2V1, mediates the synthesis of 'Lys-63'-linked-polyubiquitin chains conjugated to proteins, such as IKBKG, IRAK1, AKT1 and AKT2. Also mediates ubiquitination of free/unanchored polyubiquitin chain that leads to MAP3K7 activation. This Xenopus laevis (African clawed frog) protein is TNF receptor-associated factor 6-A (traf6-a).